A 417-amino-acid chain; its full sequence is D-amino acid dehydrogenase (417 aa).

Residue 3 to 17 coordinates FAD; it reads VVILGSGVVGVSTAW.

This sequence belongs to the DadA oxidoreductase family. FAD is required as a cofactor.

The catalysed reaction is a D-alpha-amino acid + A + H2O = a 2-oxocarboxylate + AH2 + NH4(+). Its pathway is amino-acid degradation; D-alanine degradation; NH(3) and pyruvate from D-alanine: step 1/1. Functionally, oxidative deamination of D-amino acids. This Pectobacterium atrosepticum (strain SCRI 1043 / ATCC BAA-672) (Erwinia carotovora subsp. atroseptica) protein is D-amino acid dehydrogenase.